A 431-amino-acid chain; its full sequence is Peroxisomal biogenesis factor 3 (431 aa).

At Met1–Lys10 the chain is on the peroxisomal side. A helical transmembrane segment spans residues Val11–Val28. Over Lys29–Leu431 the chain is Cytoplasmic. Positions Thr95–Glu126 are disordered. The span at Gln112 to Ala121 shows a compositional bias: polar residues.

The protein belongs to the peroxin-3 family.

It is found in the peroxisome membrane. In terms of biological role, involved in peroxisome biosynthesis. Seems to directly or indirectly sequesters components of the peroxisome biogenesis machinery. The chain is Peroxisomal biogenesis factor 3 (PEX3) from Yarrowia lipolytica (strain CLIB 122 / E 150) (Yeast).